The primary structure comprises 129 residues: MDKKAIFDSVSNMEEQIGELYQQLGDLKTNLGEMLEENNRLNLENEHLRRRLSLTDEATPEPKAETEAEHGVMAPNRKEAMQQMIELGEGYDNLVQLYKEGFHVCNVHFGSPRGNDEDCLFCLSLLNKK.

Residues 52 to 71 are disordered; it reads LSLTDEATPEPKAETEAEHG. Residues 60-71 are compositionally biased toward basic and acidic residues; sequence PEPKAETEAEHG. Zn(2+) contacts are provided by His-103, Cys-105, Cys-119, and Cys-122.

It belongs to the YabA family. In terms of assembly, homotetramer. Interacts with both DnaA and DnaN, acting as a bridge between these two proteins. Zn(2+) is required as a cofactor.

It localises to the cytoplasm. The protein localises to the nucleoid. Its function is as follows. Involved in control of chromosome replication initiation. Inhibits the cooperative binding of DnaA to the oriC region, thus negatively regulating initiation of chromosome replication. Inhibits the ability of DnaA-ATP to form a helix on DNA; does not disassemble preformed DnaA-DNA helices. Decreases the residence time of DnaA on the chromosome at its binding sites (oriC, replication forks and promoter-binding sites). Tethers DnaA to the replication machinery via the DNA polymerase beta sliding clamp subunit (dnaN). Associates with oriC and other DnaA targets on the chromosome in a DnaA-dependent manner. The protein is Replication initiation control protein YabA of Listeria monocytogenes serotype 4a (strain HCC23).